We begin with the raw amino-acid sequence, 726 residues long: Beta-adducin (726 aa).

Positions 1-25 (MSEETVPEAASPPPPQGQPYFDRFS) are disordered. Ser11 and Ser25 each carry phosphoserine. Phosphothreonine; by PKA is present on Thr55. A phosphoserine mark is found at Ser60 and Ser344. An interaction with calmodulin region spans residues 425 to 444 (KQQKEKTRWLNTPNTYLRVN). The segment at 525–726 (AEKSRSPSTE…KSKKKEKVES (202 aa)) is disordered. 2 positions are modified to phosphoserine: Ser530 and Ser532. Phosphothreonine is present on Thr533. Ser535 is subject to Phosphoserine. The segment covering 566–586 (EEYKKEVERKKLELDGEKETA) has biased composition (basic and acidic residues). Over residues 588–606 (EEPGSPAKSAPASPVQSPA) the composition is skewed to low complexity. Phosphoserine is present on residues Ser592, Ser596, Ser600, and Ser604. At Thr611 the chain carries Phosphothreonine. Phosphoserine occurs at positions 613, 617, 619, and 621. Residues 621–631 (SLEEGTKKTET) show a composition bias toward basic and acidic residues. Over residues 632 to 645 (SKAATTEPETTQPE) the composition is skewed to low complexity. Polar residues predominate over residues 665–674 (GLSQMTTSAD). Thr675 is subject to Phosphothreonine. Ser686, Ser689, Ser693, Ser697, Ser699, and Ser701 each carry phosphoserine. Residues 689–701 (SGPMSPEGSPSKS) show a composition bias toward low complexity. Over residues 702–726 (PSKKKKKFRTPSFLKKSKKKEKVES) the composition is skewed to basic residues. Phosphoserine; by PKC is present on Ser703. Positions 704–721 (KKKKKFRTPSFLKKSKKK) are interaction with calmodulin. Residue Ser713 is modified to Phosphoserine; by PKA and PKC.

It belongs to the aldolase class II family. Adducin subfamily. As to quaternary structure, heterodimer of an alpha and a beta subunit. Found in a complex with ADD2, DMTN and SLC2A1. Interacts with SLC2A1. In terms of processing, the N-terminus is blocked. Expressed mainly in brain, spleen, kidney cortex and medulla, and heart. Also expressed in human umbilical vein endothelial cells, human vascular smooth muscle cells, kidney tubular cells and K-562 cell line.

Its subcellular location is the cytoplasm. The protein localises to the cytoskeleton. It is found in the cell membrane. Membrane-cytoskeleton-associated protein that promotes the assembly of the spectrin-actin network. Binds to the erythrocyte membrane receptor SLC2A1/GLUT1 and may therefore provide a link between the spectrin cytoskeleton to the plasma membrane. Binds to calmodulin. Calmodulin binds preferentially to the beta subunit. This Homo sapiens (Human) protein is Beta-adducin (ADD2).